The following is a 191-amino-acid chain: Chromobox protein homolog 5 (191 aa).

The disordered stretch occupies residues 1 to 21 (MGKKTKRTADSSSSEDEEEYV). A phosphoserine mark is found at serine 11, serine 12, serine 13, and serine 14. The Chromo 1 domain occupies 20 to 78 (YVVEKVLDRRMVKGQVEYLLKWKGFSEEHNTWEPEKNLDCPELISEFMKKYKKMKEGEN). Lysine 32 participates in a covalent cross-link: Glycyl lysine isopeptide (Lys-Gly) (interchain with G-Cter in SUMO2). Lysine 40 is modified (N6-acetyllysine). A disordered region spans residues 70 to 117 (YKKMKEGENNKPREKSEGNKRKSSFSNSADDIKSKKKREQSNDIARGF). Positions 73 to 89 (MKEGENNKPREKSEGNK) are enriched in basic and acidic residues. Residue lysine 91 forms a Glycyl lysine isopeptide (Lys-Gly) (interchain with G-Cter in SUMO2) linkage. Residues serine 92, serine 93, serine 95, and serine 97 each carry the phosphoserine modification. Residues lysine 102, lysine 106, lysine 154, and lysine 184 each participate in a glycyl lysine isopeptide (Lys-Gly) (interchain with G-Cter in SUMO2) cross-link. In terms of domain architecture, Chromo 2; shadow subtype spans 121–179 (LEPEKIIGATDSCGDLMFLMKWKDTDEADLVLAKEANVKCPQIVIAFYEERLTWHAYPE).

As to quaternary structure, homodimer. Interacts with histone H3 methylated at 'Lys-9'. Interacts (via Chromo 2; shadow subtype domain) with the MIS12 complex subunit NSL1; the interaction is direct, involves dimeric CBX5, and occurs during interphase. Interacts with POGZ; POGZ and PXVXL motif-containing proteins such as INCENP and TRIM28 compete for interaction with CBX5. Interacts with LRIF1 (via PxVxL motif). Interacts with INCENP. Interacts with TRIM24. Interacts (via the chromoshadow domain) with ATRX; the interaction is direct. Interacts (via the chromoshadow domain) with CHAF1A; the interaction is direct. Interacts (via the chromoshadow domain) with LBR; the interaction is direct. Interacts (via the chromoshadow domain) with NIPBL; the interaction is direct. Interacts (via the chromoshadow domain) with SP100; the interaction is direct. Interacts (via the chromoshadow domain) with STAM2; the interaction is direct. Interacts (via the chromoshadow domain) with TRIM28; the interaction is direct. Interacts (via the chromoshadow domain) with CBX3; the interaction is direct. Interacts with PRR14 (via N-terminus). Interacts with RRP1B. Interacts with HNRNPU (via C-terminus); this interaction is, at least in part, RNA-dependent. Interacts with ZNF263; recruited to the SIX3 promoter along with other proteins involved in chromatin modification and transcriptional corepression where it contributes to transcriptional repression. Interacts with AURKB during mitosis. Interacts with CHAMP1. Interacts with BAHD1. Interacts with HP1BP3. Interacts with CHD3. Interacts with CHD4. Interacts with SMYD5. Interacts with KMT5B. Interacts with KMT5C. Phosphorylation of HP1 and LBR may be responsible for some of the alterations in chromatin organization and nuclear structure which occur at various times during the cell cycle. Phosphorylated during interphase and possibly hyper-phosphorylated during mitosis. In terms of processing, ubiquitinated.

It localises to the nucleus. The protein resides in the chromosome. It is found in the centromere. In terms of biological role, component of heterochromatin that recognizes and binds histone H3 tails methylated at 'Lys-9' (H3K9me), leading to epigenetic repression. In contrast, it is excluded from chromatin when 'Tyr-41' of histone H3 is phosphorylated (H3Y41ph). May contribute to the association of heterochromatin with the inner nuclear membrane by interactions with the lamin-B receptor (LBR). Involved in the formation of kinetochore through interaction with the MIS12 complex subunit NSL1. Required for the formation of the inner centromere. Functionally, component of heterochromatin that recognizes and binds histone H3 tails methylated at 'Lys-9' (H3K9me), leading to epigenetic repression. In contrast, it is excluded from chromatin when 'Tyr-41' of histone H3 is phosphorylated (H3Y41ph). Can interact with lamin-B receptor (LBR). This interaction can contribute to the association of the heterochromatin with the inner nuclear membrane. Involved in the formation of functional kinetochore through interaction with MIS12 complex proteins. The protein is Chromobox protein homolog 5 (Cbx5) of Mus musculus (Mouse).